A 210-amino-acid polypeptide reads, in one-letter code: GEM-like protein 7 (210 aa).

The GRAM domain maps to 88-166 (KIYKRLFKVC…CKINGVNQSQ (79 aa)).

The protein belongs to the GEM family.

The protein is GEM-like protein 7 of Arabidopsis thaliana (Mouse-ear cress).